The sequence spans 485 residues: uncharacterized protein (485 aa).

The next 13 membrane-spanning stretches (helical) occupy residues 13–33 (WSALSSLTIIVLGFLQMVILS), 38–58 (PFEFGVLSIMTVVFLFTDMLA), 79–99 (ALYWVNIFLGVFLFVVTIILS), 111–131 (LSFLIQLTALVFIIMPHGQQY), 160–180 (VIIGIITKNASCAVFGYLLTV), 211–231 (LLFSFYLTLDSILNYINSSIT), 234–254 (IVARVLGAIYVGGYNLSFNVA), 297–317 (INFPALLGLCIIAKDFVYLVF), 321–341 (WLFIVPTLQLLCIAGAMRMVA), 365–385 (IIIFIPVLYFSTIWNGMVGAA), 388–408 (FLICQAINALLSYFFLLKPVL), 420–440 (FIPFVHTLPMILLLLVCDIYI), and 445–465 (LTFFILKIVIGGGVYILTIFI).

It belongs to the polysaccharide synthase family.

It is found in the cell membrane. This is an uncharacterized protein from Klebsiella pneumoniae.